Here is a 423-residue protein sequence, read N- to C-terminus: Riboflavin biosynthesis protein RibBA (423 aa).

Positions 1–204 (MTRLDSVERA…IADLIEWRRK (204 aa)) are DHBP synthase. Residues 28 to 29 (RE), D33, 141 to 145 (RPGHT), and E165 contribute to the D-ribulose 5-phosphate site. E29 is a Mg(2+) binding site. Residue H144 coordinates Mg(2+). The segment at 205–423 (HEKHIARVAE…AVPGEFGGAV (219 aa)) is GTP cyclohydrolase II. 259–263 (RVHSE) is a binding site for GTP. Zn(2+) contacts are provided by C264, C275, and C277. GTP contacts are provided by residues Q280, 303 to 305 (EGR), and T325. Residue D337 is the Proton acceptor; for GTP cyclohydrolase activity of the active site. The Nucleophile; for GTP cyclohydrolase activity role is filled by R339. T360 and K365 together coordinate GTP.

It in the N-terminal section; belongs to the DHBP synthase family. The protein in the C-terminal section; belongs to the GTP cyclohydrolase II family. The cofactor is Mg(2+). Requires Mn(2+) as cofactor. It depends on Zn(2+) as a cofactor.

The catalysed reaction is D-ribulose 5-phosphate = (2S)-2-hydroxy-3-oxobutyl phosphate + formate + H(+). It carries out the reaction GTP + 4 H2O = 2,5-diamino-6-hydroxy-4-(5-phosphoribosylamino)-pyrimidine + formate + 2 phosphate + 3 H(+). Its pathway is cofactor biosynthesis; riboflavin biosynthesis; 2-hydroxy-3-oxobutyl phosphate from D-ribulose 5-phosphate: step 1/1. It participates in cofactor biosynthesis; riboflavin biosynthesis; 5-amino-6-(D-ribitylamino)uracil from GTP: step 1/4. In terms of biological role, catalyzes the conversion of D-ribulose 5-phosphate to formate and 3,4-dihydroxy-2-butanone 4-phosphate. Catalyzes the conversion of GTP to 2,5-diamino-6-ribosylamino-4(3H)-pyrimidinone 5'-phosphate (DARP), formate and pyrophosphate. In Mycolicibacterium gilvum (strain PYR-GCK) (Mycobacterium gilvum (strain PYR-GCK)), this protein is Riboflavin biosynthesis protein RibBA.